Reading from the N-terminus, the 271-residue chain is Ribose-phosphate pyrophosphokinase 2 (271 aa).

ATP-binding positions include 34 to 36 (DGE) and 82 to 83 (RQ). Positions 115 and 150 each coordinate Mg(2+). Lysine 173 is a catalytic residue. D-ribose 5-phosphate contacts are provided by residues arginine 175, aspartate 199, and 203 to 207 (STGGT).

The protein belongs to the ribose-phosphate pyrophosphokinase family. Class III (archaeal) subfamily. Requires Mg(2+) as cofactor.

It is found in the cytoplasm. It carries out the reaction D-ribose 5-phosphate + ATP = 5-phospho-alpha-D-ribose 1-diphosphate + AMP + H(+). The protein operates within metabolic intermediate biosynthesis; 5-phospho-alpha-D-ribose 1-diphosphate biosynthesis; 5-phospho-alpha-D-ribose 1-diphosphate from D-ribose 5-phosphate (route I): step 1/1. Involved in the biosynthesis of the central metabolite phospho-alpha-D-ribosyl-1-pyrophosphate (PRPP) via the transfer of pyrophosphoryl group from ATP to 1-hydroxyl of ribose-5-phosphate (Rib-5-P). This chain is Ribose-phosphate pyrophosphokinase 2, found in Archaeoglobus fulgidus (strain ATCC 49558 / DSM 4304 / JCM 9628 / NBRC 100126 / VC-16).